Here is a 351-residue protein sequence, read N- to C-terminus: Homeobox-leucine zipper protein HOX23 (351 aa).

Residues 34–128 (LQDHAHGGHG…SFESGNKLEP (95 aa)) are disordered. A compositionally biased stretch (low complexity) spans 56 to 65 (SPFLPDLAMD). Residues 101–160 (GGEKKRRLSVEQVRTLERSFESGNKLEPERKAQLARALGLQPRQVAIWFQNRRARWKTKQ) constitute a DNA-binding region (homeobox). Residues 114 to 128 (RTLERSFESGNKLEP) are compositionally biased toward basic and acidic residues. Residues 159 to 203 (KQLEKDFDALRRQLDAARAENDALLSLNSKLHAEIVALKGGAAAA) form a leucine-zipper region. A disordered region spans residues 227-263 (EASCSNRSENSSEINLDISRPAPPPPPPPANESPVNR). Residues 228–240 (ASCSNRSENSSEI) are compositionally biased toward polar residues. Pro residues predominate over residues 247–257 (PAPPPPPPPAN).

Belongs to the HD-ZIP homeobox family. Class I subfamily. As to expression, expressed in seedlings, roots, stems, leaf sheaths and panicles.

The protein resides in the nucleus. Probable transcription factor. In Oryza sativa subsp. indica (Rice), this protein is Homeobox-leucine zipper protein HOX23 (HOX23).